Consider the following 341-residue polypeptide: Pyrophosphate--fructose 6-phosphate 1-phosphotransferase (341 aa).

Residue Gly10 participates in diphosphate binding. Residue Glu103 participates in Mg(2+) binding. Substrate contacts are provided by residues 125 to 127, Arg162, 169 to 171, Glu221, Arg265, and 271 to 274; these read TID, MGR, and HTQR. Asp127 acts as the Proton acceptor in catalysis.

This sequence belongs to the phosphofructokinase type A (PFKA) family. Mixed-substrate PFK group III subfamily. Homotetramer. Requires Mg(2+) as cofactor.

It is found in the cytoplasm. The enzyme catalyses beta-D-fructose 6-phosphate + diphosphate = beta-D-fructose 1,6-bisphosphate + phosphate + H(+). It functions in the pathway carbohydrate degradation; glycolysis; D-glyceraldehyde 3-phosphate and glycerone phosphate from D-glucose: step 3/4. With respect to regulation, non-allosteric. Functionally, catalyzes the phosphorylation of D-fructose 6-phosphate, the first committing step of glycolysis. Uses inorganic phosphate (PPi) as phosphoryl donor instead of ATP like common ATP-dependent phosphofructokinases (ATP-PFKs), which renders the reaction reversible, and can thus function both in glycolysis and gluconeogenesis. Consistently, PPi-PFK can replace the enzymes of both the forward (ATP-PFK) and reverse (fructose-bisphosphatase (FBPase)) reactions. In Amycolatopsis methanolica, this protein is Pyrophosphate--fructose 6-phosphate 1-phosphotransferase.